Consider the following 168-residue polypeptide: Shikimate kinase (168 aa).

10 to 15 (CSGKST) contacts ATP. Position 14 (serine 14) interacts with Mg(2+). Residues aspartate 32, arginine 56, and glycine 78 each coordinate substrate. Arginine 116 is a binding site for ATP. Arginine 133 serves as a coordination point for substrate.

It belongs to the shikimate kinase family. Monomer. The cofactor is Mg(2+).

The protein resides in the cytoplasm. The catalysed reaction is shikimate + ATP = 3-phosphoshikimate + ADP + H(+). It participates in metabolic intermediate biosynthesis; chorismate biosynthesis; chorismate from D-erythrose 4-phosphate and phosphoenolpyruvate: step 5/7. Its function is as follows. Catalyzes the specific phosphorylation of the 3-hydroxyl group of shikimic acid using ATP as a cosubstrate. This is Shikimate kinase from Aquifex aeolicus (strain VF5).